We begin with the raw amino-acid sequence, 198 residues long: Copy number protein (198 aa).

It localises to the cell membrane. Functionally, involved in copy number control of pIP404. This basic and hydrophobic protein may exert its effect from the cytoplasmic membrane. This is Copy number protein (cop) from Clostridium perfringens.